The primary structure comprises 295 residues: NAD kinase (295 aa).

Aspartate 72 functions as the Proton acceptor in the catalytic mechanism. NAD(+) contacts are provided by residues aspartate 72–glycine 73, asparagine 146–aspartate 147, arginine 157, lysine 174, aspartate 176, threonine 187–serine 192, and glutamine 247.

It belongs to the NAD kinase family. A divalent metal cation serves as cofactor.

It localises to the cytoplasm. The enzyme catalyses NAD(+) + ATP = ADP + NADP(+) + H(+). Functionally, involved in the regulation of the intracellular balance of NAD and NADP, and is a key enzyme in the biosynthesis of NADP. Catalyzes specifically the phosphorylation on 2'-hydroxyl of the adenosine moiety of NAD to yield NADP. The polypeptide is NAD kinase (Pseudomonas aeruginosa (strain LESB58)).